A 494-amino-acid chain; its full sequence is Sugar phosphate exchanger 3 (494 aa).

The helical transmembrane segment at 16-36 (FSHHHVVVFLLTFFSYSLLHA) threads the bilayer. Asn58 carries an N-linked (GlcNAc...) asparagine glycan. The next 5 helical transmembrane spans lie at 81-101 (TLFLGTLDTIFLFSYAVGLFI), 113-133 (WVLSFGMCSSALVVFVFGALT), 147-167 (LWIVNGLLQSTGWPCVVAVMG), 177-197 (VVFGLWSACASVGNILGACLA), and 209-229 (FLVTASVQFAGGIVIFFGLLV). Residue Asn266 is glycosylated (N-linked (GlcNAc...) asparagine). Helical transmembrane passes span 297–317 (LAYACLKLVNYSFFFWLPFYL), 333–353 (IWYDVGGIIGGTLQGFISDVL), 357–377 (APVLALSLLLAVGSLIGYSRS), 386–406 (LLMTVTGFFIGGPSNMISSAI), 428–448 (GIVDGSGSIGAAVGQYLVSLI), and 452–472 (LGWMWVFYFFILMTSCTIVFI).

Belongs to the major facilitator superfamily. Organophosphate:Pi antiporter (OPA) (TC 2.A.1.4) family. Interacts with ATRAID; the interaction is direct and both proteins are mutually dependent for their stability. Glycosylated. Expressed in liver, kidney, intestine and pancreas.

It localises to the endoplasmic reticulum membrane. It is found in the lysosome membrane. Its function is as follows. Unlike the other SLC37 members, lacks glucose-6-phosphate antiporter activity. In osteoclasts, forms a transporter complex with ATRAID for nitrogen-containing-bisphophonates (N-BPs) required for releasing N-BP molecules that have trafficked to lysosomes through fluid-phase endocytosis into the cytosol. This Homo sapiens (Human) protein is Sugar phosphate exchanger 3.